The sequence spans 326 residues: MIKLLYPKFWQKQNIIAYLLLPVSLIYQFLGYLRASLAQPIMLPAKVICVGNCSVGGTGKTQIVIYLAKLLKARNVSFVIVTKGYGSKLKNAAIVNARHTVLEVGDEGVILVKYGLVIATKNIKEALPLINELKPDVIIVDDFLQNPHFHKDFTIVSVDSQRLFGNGFLIPAGPLRQYPNKALDAADLVFLVSSTNDKMLNILTPYVNKLINAQIVPLNNIDKTKNYFAFSGIGNPERFFSTLKNYGLNIVGYKIFPDHYNYLQADLENLYSLAKEHNNATLITTRKDYVKFHDLNNNIVCLDVELSINNPNLLNEKIFKKAQIFN.

Residue 54–61 participates in ATP binding; the sequence is SVGGTGKT.

It belongs to the LpxK family.

It catalyses the reaction a lipid A disaccharide + ATP = a lipid IVA + ADP + H(+). The protein operates within glycolipid biosynthesis; lipid IV(A) biosynthesis; lipid IV(A) from (3R)-3-hydroxytetradecanoyl-[acyl-carrier-protein] and UDP-N-acetyl-alpha-D-glucosamine: step 6/6. Its function is as follows. Transfers the gamma-phosphate of ATP to the 4'-position of a tetraacyldisaccharide 1-phosphate intermediate (termed DS-1-P) to form tetraacyldisaccharide 1,4'-bis-phosphate (lipid IVA). The chain is Tetraacyldisaccharide 4'-kinase from Rickettsia canadensis (strain McKiel).